Here is a 416-residue protein sequence, read N- to C-terminus: Formyl-CoA:oxalate CoA-transferase (416 aa).

CoA contacts are provided by residues 17 to 18 (QS), R38, 72 to 75 (LNTK), 96 to 98 (NFH), H104, and 137 to 140 (KAYE). D169 (nucleophile) is an active-site residue. Residue 248–250 (GGQ) participates in substrate binding. 273–275 (QEQ) contributes to the CoA binding site.

This sequence belongs to the CoA-transferase III family. Frc subfamily. Homodimer.

It carries out the reaction formyl-CoA + oxalate = oxalyl-CoA + formate. Its pathway is metabolic intermediate degradation; oxalate degradation; CO(2) and formate from oxalate: step 1/2. In terms of biological role, involved in the catabolism of oxalate and in the adapatation to low pH via the induction of the oxalate-dependent acid tolerance response (ATR). Catalyzes the transfer of the CoA moiety from formyl-CoA to oxalate. This Escherichia coli (strain ATCC 8739 / DSM 1576 / NBRC 3972 / NCIMB 8545 / WDCM 00012 / Crooks) protein is Formyl-CoA:oxalate CoA-transferase.